Reading from the N-terminus, the 102-residue chain is Small ribosomal subunit protein eS24 (102 aa).

A disordered region spans residues 70-102 (VYDSPAQAAEVEHDHMLERNKIGADDADAEEAE). The span at 79-93 (EVEHDHMLERNKIGA) shows a compositional bias: basic and acidic residues.

Belongs to the eukaryotic ribosomal protein eS24 family.

The protein is Small ribosomal subunit protein eS24 of Halobacterium salinarum (strain ATCC 29341 / DSM 671 / R1).